Consider the following 241-residue polypeptide: 2-C-methyl-D-erythritol 4-phosphate cytidylyltransferase (241 aa).

It belongs to the IspD/TarI cytidylyltransferase family. IspD subfamily.

The catalysed reaction is 2-C-methyl-D-erythritol 4-phosphate + CTP + H(+) = 4-CDP-2-C-methyl-D-erythritol + diphosphate. The protein operates within isoprenoid biosynthesis; isopentenyl diphosphate biosynthesis via DXP pathway; isopentenyl diphosphate from 1-deoxy-D-xylulose 5-phosphate: step 2/6. In terms of biological role, catalyzes the formation of 4-diphosphocytidyl-2-C-methyl-D-erythritol from CTP and 2-C-methyl-D-erythritol 4-phosphate (MEP). The polypeptide is 2-C-methyl-D-erythritol 4-phosphate cytidylyltransferase (Hahella chejuensis (strain KCTC 2396)).